Here is a 364-residue protein sequence, read N- to C-terminus: Protein FAM81A (364 aa).

Coiled coils occupy residues Phe-75–Ile-107, Asn-158–Ser-189, and Ala-261–Asn-287. Residues Glu-281 to His-300 form a disordered region.

This sequence belongs to the FAM81 family. As to quaternary structure, interacts with DLG4/PSD-95, GRIN2B/GLUN2B and SYNGAP1; the interactions facilitate condensate formation. As to expression, expressed in most regions of the brain (at protein level).

It localises to the postsynaptic density. The protein localises to the cytoplasm. Its function is as follows. Facilitates the interaction and assembly of proteins within the postsynaptic density by promoting the condensation of postsynaptic proteins via liquid-liquid phase separation. Required for neuronal activity. Accumulation at the postsynaptic density results in enlargement of dendritic spines. The chain is Protein FAM81A (Fam81a) from Mus musculus (Mouse).